The primary structure comprises 290 residues: Manganese efflux system protein MneS (290 aa).

6 helical membrane passes run 15 to 35 (LVSI…GYLF), 39 to 61 (ALTA…LIGL), 82 to 102 (IASL…LFSA), 113 to 133 (TPDM…LIVY), 159 to 179 (AFVS…LAWI), and 181 to 201 (TVTA…IFKE).

Belongs to the cation diffusion facilitator (CDF) transporter (TC 2.A.4) family.

It localises to the cell membrane. Secondary manganese efflux system. May prevent manganese intoxication. The chain is Manganese efflux system protein MneS from Bacillus subtilis (strain 168).